We begin with the raw amino-acid sequence, 568 residues long: Sulfate adenylyltransferase (568 aa).

The interval 1 to 162 (MANSPHGGVL…IEAVNKLNHY (162 aa)) is N-terminal. Residues 163-388 (DYVALRYSPA…LRESSPPRAT (226 aa)) form a catalytic region. Position 190 (Gln-190) interacts with sulfate. ATP-binding positions include 190-193 (QTRN) and 284-287 (GRDH). Residues Thr-191, Arg-192, and Asn-193 contribute to the active site. Arg-192 contacts sulfate. Ala-288 serves as a coordination point for sulfate. Residue Val-326 participates in ATP binding. The allosteric regulation domain; adenylyl-sulfate kinase-like stretch occupies residues 389–568 (QGFTIFLTGY…LESEGYFDRL (180 aa)). 3'-phosphoadenylyl sulfate-binding positions include 428–431 (DTVR), Arg-445, 471–472 (IA), and Arg-510.

The protein in the N-terminal section; belongs to the sulfate adenylyltransferase family. It in the C-terminal section; belongs to the APS kinase family. As to quaternary structure, homohexamer. Dimer of trimers.

The protein resides in the cytoplasm. It catalyses the reaction sulfate + ATP + H(+) = adenosine 5'-phosphosulfate + diphosphate. It functions in the pathway sulfur metabolism; hydrogen sulfide biosynthesis; sulfite from sulfate: step 1/3. With respect to regulation, allosterically inhibited by 3'-phosphoadenosine 5'-phosphosulfate (PAPS). Functionally, catalyzes the first intracellular reaction of sulfate assimilation, forming adenosine-5'-phosphosulfate (APS) from inorganic sulfate and ATP. Plays an important role in sulfate activation as a component of the biosynthesis pathway of sulfur-containing amino acids. The polypeptide is Sulfate adenylyltransferase (Aspergillus terreus).